The following is a 194-amino-acid chain: Large ribosomal subunit protein bL9 (194 aa).

The segment at 167–194 is disordered; it reads EDRAAEAEAASDMAAGGAGSFEGDHYES.

The protein belongs to the bacterial ribosomal protein bL9 family.

Binds to the 23S rRNA. The sequence is that of Large ribosomal subunit protein bL9 from Caulobacter sp. (strain K31).